Consider the following 88-residue polypeptide: Molybdopterin synthase sulfur carrier subunit (88 aa).

G88 bears the 1-thioglycine; alternate mark. G88 carries the glycyl adenylate; alternate modification.

It belongs to the MoaD family. MOCS2A subfamily. In terms of assembly, heterotetramer; composed of 2 small (MOCS2A) and 2 large (MOCS2B) subunits. C-terminal thiocarboxylation occurs in 2 steps, it is first acyl-adenylated (-COAMP) via the hesA/moeB/thiF part of MOCS3, then thiocarboxylated (-COSH) via the rhodanese domain of MOCS3. Widely expressed. Highest levels are found in heart and skeletal muscle. Lower levels are present in brain, kidney and pancreas. Very low levels are found in lung and peripheral blood leukocytes.

It localises to the cytoplasm. The protein localises to the cytosol. It functions in the pathway cofactor biosynthesis; molybdopterin biosynthesis. Its function is as follows. Acts as a sulfur carrier required for molybdopterin biosynthesis. Component of the molybdopterin synthase complex that catalyzes the conversion of precursor Z into molybdopterin by mediating the incorporation of 2 sulfur atoms into precursor Z to generate a dithiolene group. In the complex, serves as sulfur donor by being thiocarboxylated (-COSH) at its C-terminus by MOCS3. After interaction with MOCS2B, the sulfur is then transferred to precursor Z to form molybdopterin. This is Molybdopterin synthase sulfur carrier subunit from Homo sapiens (Human).